The chain runs to 579 residues: Glucans biosynthesis protein G (579 aa).

Positions 1–37 (MIVSPHKASRIPGNRLRKALMASAALVGLMSAGQLWA) are cleaved as a signal peptide. The interval 516–579 (AKPAEEAKHD…TWSYQLPADE (64 aa)) is disordered. Basic and acidic residues predominate over residues 517-539 (KPAEEAKHDKTAAKHGKAEKAAK).

It belongs to the OpgD/OpgG family.

It is found in the periplasm. The protein operates within glycan metabolism; osmoregulated periplasmic glucan (OPG) biosynthesis. In terms of biological role, involved in the biosynthesis of osmoregulated periplasmic glucans (OPGs). This chain is Glucans biosynthesis protein G, found in Pseudomonas putida (strain W619).